The sequence spans 262 residues: Cytochrome c oxidase subunit 3 (262 aa).

The next 7 membrane-spanning stretches (helical) occupy residues 13–33 (PWPLLASFAAFLSTTGGVMYM), 38–58 (GGGLLLAIGQLSLFYVMYVWW), 82–102 (GMLLFILSEIMFFFAFFWAFF), 134–154 (TIILLTSGASVTWAHHAILAG), 159–179 (GIISLAITVLLAVIFTGFQAL), 200–220 (ATGFHGFHVIIGTIFIAVCLF), and 237–257 (AAAWYWHMVDVVWLFLFVCIY).

The protein belongs to the cytochrome c oxidase subunit 3 family. In terms of assembly, component of the cytochrome c oxidase (complex IV, CIV), a multisubunit enzyme composed of a catalytic core of 3 subunits and several supernumerary subunits. The complex exists as a monomer or a dimer and forms supercomplexes (SCs) in the inner mitochondrial membrane with ubiquinol-cytochrome c oxidoreductase (cytochrome b-c1 complex, complex III, CIII).

The protein localises to the mitochondrion inner membrane. The enzyme catalyses 4 Fe(II)-[cytochrome c] + O2 + 8 H(+)(in) = 4 Fe(III)-[cytochrome c] + 2 H2O + 4 H(+)(out). Its function is as follows. Component of the cytochrome c oxidase, the last enzyme in the mitochondrial electron transport chain which drives oxidative phosphorylation. The respiratory chain contains 3 multisubunit complexes succinate dehydrogenase (complex II, CII), ubiquinol-cytochrome c oxidoreductase (cytochrome b-c1 complex, complex III, CIII) and cytochrome c oxidase (complex IV, CIV), that cooperate to transfer electrons derived from NADH and succinate to molecular oxygen, creating an electrochemical gradient over the inner membrane that drives transmembrane transport and the ATP synthase. Cytochrome c oxidase is the component of the respiratory chain that catalyzes the reduction of oxygen to water. Electrons originating from reduced cytochrome c in the intermembrane space (IMS) are transferred via the dinuclear copper A center (CU(A)) of subunit 2 and heme A of subunit 1 to the active site in subunit 1, a binuclear center (BNC) formed by heme A3 and copper B (CU(B)). The BNC reduces molecular oxygen to 2 water molecules using 4 electrons from cytochrome c in the IMS and 4 protons from the mitochondrial matrix. This is Cytochrome c oxidase subunit 3 (COX3) from Prototheca wickerhamii.